A 725-amino-acid polypeptide reads, in one-letter code: Phosphoribosylformylglycinamidine synthase subunit PurL (725 aa).

His41 is a catalytic residue. Tyr44 and Lys83 together coordinate ATP. Residue Glu85 coordinates Mg(2+). Residues Ser86 to His89 and Arg108 contribute to the substrate site. The Proton acceptor role is filled by His87. Asp109 serves as a coordination point for Mg(2+). Position 231 (Gln231) interacts with substrate. Asp259 contributes to the Mg(2+) binding site. Substrate is bound at residue Glu303–Gln305. Positions 485 and 522 each coordinate ATP. Asn523 contributes to the Mg(2+) binding site. A substrate-binding site is contributed by Ser525.

Belongs to the FGAMS family. In terms of assembly, monomer. Part of the FGAM synthase complex composed of 1 PurL, 1 PurQ and 2 PurS subunits.

It localises to the cytoplasm. It catalyses the reaction N(2)-formyl-N(1)-(5-phospho-beta-D-ribosyl)glycinamide + L-glutamine + ATP + H2O = 2-formamido-N(1)-(5-O-phospho-beta-D-ribosyl)acetamidine + L-glutamate + ADP + phosphate + H(+). It participates in purine metabolism; IMP biosynthesis via de novo pathway; 5-amino-1-(5-phospho-D-ribosyl)imidazole from N(2)-formyl-N(1)-(5-phospho-D-ribosyl)glycinamide: step 1/2. Part of the phosphoribosylformylglycinamidine synthase complex involved in the purines biosynthetic pathway. Catalyzes the ATP-dependent conversion of formylglycinamide ribonucleotide (FGAR) and glutamine to yield formylglycinamidine ribonucleotide (FGAM) and glutamate. The FGAM synthase complex is composed of three subunits. PurQ produces an ammonia molecule by converting glutamine to glutamate. PurL transfers the ammonia molecule to FGAR to form FGAM in an ATP-dependent manner. PurS interacts with PurQ and PurL and is thought to assist in the transfer of the ammonia molecule from PurQ to PurL. In Thermus thermophilus (strain ATCC BAA-163 / DSM 7039 / HB27), this protein is Phosphoribosylformylglycinamidine synthase subunit PurL.